The following is a 260-amino-acid chain: Imidazole glycerol phosphate synthase subunit HisF (260 aa).

Active-site residues include Asp11 and Asp130.

It belongs to the HisA/HisF family. As to quaternary structure, heterodimer of HisH and HisF.

Its subcellular location is the cytoplasm. It catalyses the reaction 5-[(5-phospho-1-deoxy-D-ribulos-1-ylimino)methylamino]-1-(5-phospho-beta-D-ribosyl)imidazole-4-carboxamide + L-glutamine = D-erythro-1-(imidazol-4-yl)glycerol 3-phosphate + 5-amino-1-(5-phospho-beta-D-ribosyl)imidazole-4-carboxamide + L-glutamate + H(+). The protein operates within amino-acid biosynthesis; L-histidine biosynthesis; L-histidine from 5-phospho-alpha-D-ribose 1-diphosphate: step 5/9. Its function is as follows. IGPS catalyzes the conversion of PRFAR and glutamine to IGP, AICAR and glutamate. The HisF subunit catalyzes the cyclization activity that produces IGP and AICAR from PRFAR using the ammonia provided by the HisH subunit. This chain is Imidazole glycerol phosphate synthase subunit HisF, found in Psychrobacter arcticus (strain DSM 17307 / VKM B-2377 / 273-4).